The sequence spans 490 residues: Transcription factor lin-26 (490 aa).

Disordered regions lie at residues 96 to 176 (KYKD…PLHQ), 236 to 262 (TPEY…EPDS), and 302 to 326 (ASKP…KKHR). The segment at 101–110 (SSSPESPSTT) is PEST. Positions 101-120 (SSSPESPSTTASTAAQHTPP) are enriched in low complexity. 2 stretches are compositionally biased toward polar residues: residues 123–132 (AVSTPTSINT) and 151–176 (NLST…PLHQ). Residues 236–260 (TPEYDDNHHSETISKASSEDLKTEP) are compositionally biased toward basic and acidic residues. Residues 353 to 381 (YKCALCGKPTTLNSTGSRWNLLRHVIMIH) form a C2H2-type; degenerate zinc finger.

Expressed in somatic gonads and germline precursors until the 50-cell stage. After the 100-cell stage, expression is seen in differentiating hypodermal and support cells (at protein level).

It is found in the nucleus. Its function is as follows. Probable transcription factor. Required to specify the fates of hypodermal and neuron-associated support cells. Functions during vulval development, playing a role in vulval precursor cell fate specification. Positively modulates expression of homeobox protein lin-39, perhaps by binding to regulatory regions of the lin-39 gene, acting in the vulval lineage. This chain is Transcription factor lin-26, found in Caenorhabditis elegans.